A 303-amino-acid polypeptide reads, in one-letter code: MGFGPYYFVKGLPLYELITHEFINTFVKKGSCYALTYNTNIDEDNTVALLPNGKLILSLDKDTYEETGLQGCPSQYSGRKTMRFIVSIDLMDLSSNLDSKKYKRVSWAFKEKKPLKFDFLLAWHQTGAEGSTMMSYFSGYGIQEHQPKIALSTTPDLRCPVLRSGLLGGEPEAACSAHELFDWLGAVFSHADLNNEPYNFVSTYCCPQPSSVVAQASLCSVTGFLLPERICVLLEQLCRYFDEPKLAPWVTLSVQGFADSPVSWRESEHGFQKGGEHLYNFVIFNNRDYWLQMAVGADDDCPP.

Component of nuclear RNase P and RNase MRP ribonucleoproteins. RNase P consists of a catalytic RNA moiety and about 10 protein subunits; POP1, POP4, POP5, POP7, RPP14, RPP21, RPP25, RPP30, RPP38 and RPP40. Within the RNase P complex, POP1, POP7 and RPP25 form the 'finger' subcomplex, POP5, RPP14, RPP40 and homodimeric RPP30 form the 'palm' subcomplex, and RPP21, POP4 and RPP38 form the 'wrist' subcomplex. All subunits of the RNase P complex interact with the catalytic RNA. Several subunits of RNase P are also part of the RNase MRP complex. RNase MRP consists of a catalytic RNA moiety and about 8 protein subunits; POP1, POP7, RPP25, RPP30, RPP38, RPP40 and possibly also POP4 and POP5.

It localises to the nucleus. Its subcellular location is the nucleolus. Its function is as follows. Component of ribonuclease P, a ribonucleoprotein complex that generates mature tRNA molecules by cleaving their 5'-ends. Also a component of the MRP ribonuclease complex, which cleaves pre-rRNA sequences. This is Ribonuclease P protein subunit p40 (RPP40) from Bos taurus (Bovine).